Reading from the N-terminus, the 898-residue chain is Putative disease resistance protein At1g63350 (898 aa).

The stretch at 24–88 (VSYTHNLEKN…IESRVNDLLN (65 aa)) forms a coiled coil. An NB-ARC domain is found at 137–440 (DQASTSEVEE…CEEIIDGSEG (304 aa)). ATP is bound at residue 179 to 186 (GMGGVGKT). 6 LRR repeats span residues 516–537 (VVRR…LDCM), 538–559 (ELTT…FFNS), 562–584 (KLAV…ISEL), 586–608 (SLQY…QELK), 609–631 (KLIH…SCLH), and 632–654 (NLKV…KELE).

The protein belongs to the disease resistance NB-LRR family.

Functionally, potential disease resistance protein. In Arabidopsis thaliana (Mouse-ear cress), this protein is Putative disease resistance protein At1g63350.